We begin with the raw amino-acid sequence, 163 residues long: Putative MucR family transcriptional regulatory protein RA0938 (163 aa).

This sequence belongs to the ros/MucR family.

The polypeptide is Putative MucR family transcriptional regulatory protein RA0938 (Rhizobium meliloti (strain 1021) (Ensifer meliloti)).